The following is a 432-amino-acid chain: Adenylosuccinate synthetase (432 aa).

Residues 12 to 18 (GDEGKGK) and 40 to 42 (GHT) contribute to the GTP site. Aspartate 13 (proton acceptor) is an active-site residue. Residues aspartate 13 and glycine 40 each contribute to the Mg(2+) site. Residues 13 to 16 (DEGK), 38 to 41 (NAGH), threonine 130, arginine 144, glutamine 225, threonine 240, and arginine 304 each bind IMP. The Proton donor role is filled by histidine 41. Residue 300–306 (STTGRPR) coordinates substrate. Residues arginine 306, 332-334 (KLD), and 414-416 (SVG) contribute to the GTP site.

Belongs to the adenylosuccinate synthetase family. As to quaternary structure, homodimer. The cofactor is Mg(2+).

Its subcellular location is the cytoplasm. The enzyme catalyses IMP + L-aspartate + GTP = N(6)-(1,2-dicarboxyethyl)-AMP + GDP + phosphate + 2 H(+). It participates in purine metabolism; AMP biosynthesis via de novo pathway; AMP from IMP: step 1/2. Plays an important role in the de novo pathway of purine nucleotide biosynthesis. Catalyzes the first committed step in the biosynthesis of AMP from IMP. This Geobacter sp. (strain M21) protein is Adenylosuccinate synthetase.